We begin with the raw amino-acid sequence, 369 residues long: Protein phosphatase 1 regulatory inhibitor subunit PPP1R8 homolog (369 aa).

The span at 1–11 shows a compositional bias: basic and acidic residues; sequence MYGRSGLDRFK. The disordered stretch occupies residues 1-26; sequence MYGRSGLDRFKKSQTSEPFSVSANPP. A compositionally biased stretch (polar residues) spans 13–23; sequence SQTSEPFSVSA. An FHA domain is found at 87–138; sequence HIFGRQHQTCDFVLDHQSVSRQHAAVVPHKNGSIFVIDLGSAHGTFVANERL. The segment at 345–369 is disordered; sequence VSQPAAETECGGVGEEDDNDDLFGD. The segment covering 358–369 has biased composition (acidic residues); the sequence is GEEDDNDDLFGD.

As to quaternary structure, interacts with human protein phosphatase PPP1C.

In terms of biological role, inhibitor of protein-phosphatase 1 (PP1). Binds to and inhibits PP1 activity. This chain is Protein phosphatase 1 regulatory inhibitor subunit PPP1R8 homolog, found in Arabidopsis thaliana (Mouse-ear cress).